The primary structure comprises 398 residues: 4-hydroxy-3-methylbut-2-enyl diphosphate reductase (398 aa).

Cysteine 66 contacts [4Fe-4S] cluster. Residue histidine 96 coordinates (2E)-4-hydroxy-3-methylbut-2-enyl diphosphate. Histidine 96 contributes to the dimethylallyl diphosphate binding site. Histidine 96 contributes to the isopentenyl diphosphate binding site. Cysteine 157 serves as a coordination point for [4Fe-4S] cluster. Position 185 (histidine 185) interacts with (2E)-4-hydroxy-3-methylbut-2-enyl diphosphate. Residue histidine 185 participates in dimethylallyl diphosphate binding. Histidine 185 serves as a coordination point for isopentenyl diphosphate. Glutamate 187 functions as the Proton donor in the catalytic mechanism. Threonine 250 serves as a coordination point for (2E)-4-hydroxy-3-methylbut-2-enyl diphosphate. Cysteine 288 is a binding site for [4Fe-4S] cluster. Residues serine 317, serine 318, asparagine 319, and serine 379 each contribute to the (2E)-4-hydroxy-3-methylbut-2-enyl diphosphate site. 4 residues coordinate dimethylallyl diphosphate: serine 317, serine 318, asparagine 319, and serine 379. Isopentenyl diphosphate contacts are provided by serine 317, serine 318, asparagine 319, and serine 379.

The protein belongs to the IspH family. [4Fe-4S] cluster is required as a cofactor.

It catalyses the reaction isopentenyl diphosphate + 2 oxidized [2Fe-2S]-[ferredoxin] + H2O = (2E)-4-hydroxy-3-methylbut-2-enyl diphosphate + 2 reduced [2Fe-2S]-[ferredoxin] + 2 H(+). The catalysed reaction is dimethylallyl diphosphate + 2 oxidized [2Fe-2S]-[ferredoxin] + H2O = (2E)-4-hydroxy-3-methylbut-2-enyl diphosphate + 2 reduced [2Fe-2S]-[ferredoxin] + 2 H(+). Its pathway is isoprenoid biosynthesis; dimethylallyl diphosphate biosynthesis; dimethylallyl diphosphate from (2E)-4-hydroxy-3-methylbutenyl diphosphate: step 1/1. It functions in the pathway isoprenoid biosynthesis; isopentenyl diphosphate biosynthesis via DXP pathway; isopentenyl diphosphate from 1-deoxy-D-xylulose 5-phosphate: step 6/6. In terms of biological role, catalyzes the conversion of 1-hydroxy-2-methyl-2-(E)-butenyl 4-diphosphate (HMBPP) into a mixture of isopentenyl diphosphate (IPP) and dimethylallyl diphosphate (DMAPP). Acts in the terminal step of the DOXP/MEP pathway for isoprenoid precursor biosynthesis. The polypeptide is 4-hydroxy-3-methylbut-2-enyl diphosphate reductase (Prochlorococcus marinus (strain MIT 9313)).